We begin with the raw amino-acid sequence, 353 residues long: Inactive metacaspase-4 (353 aa).

The N-myristoyl glycine moiety is linked to residue Gly-2.

This sequence belongs to the peptidase C14B family. In terms of processing, palmitoylated. Proteolytic cleavage by MCA3 occurs prior or during secretion and requires MCA4 membrane localization. Cleavage is dispensable for secretion and parasite growth and virulence in the mammalian host. In vitro, can be cleaved by MCA2 but specifically cleaved by MCA3 in vivo.

Its subcellular location is the cell projection. The protein localises to the cilium. It is found in the flagellum membrane. It localises to the secreted. In terms of biological role, inactive metacaspase which plays a role in parasite bloodstream form growth and in parasite virulence within the mammalian host. This is Inactive metacaspase-4 from Trypanosoma brucei brucei.